The chain runs to 224 residues: Imidazoleglycerol-phosphate dehydratase (224 aa).

The protein belongs to the imidazoleglycerol-phosphate dehydratase family.

The catalysed reaction is D-erythro-1-(imidazol-4-yl)glycerol 3-phosphate = 3-(imidazol-4-yl)-2-oxopropyl phosphate + H2O. The protein operates within amino-acid biosynthesis; L-histidine biosynthesis; L-histidine from 5-phospho-alpha-D-ribose 1-diphosphate: step 6/9. The polypeptide is Imidazoleglycerol-phosphate dehydratase (HIS3) (Komagataella pastoris (Yeast)).